The primary structure comprises 407 residues: Dephospho-CoA kinase (407 aa).

The DPCK domain occupies 3–201 (RIGLTGGIGA…ERIVPFAHNL (199 aa)). An ATP-binding site is contributed by 11–16 (GAGKSA). The UPF0157 stretch occupies residues 196–407 (PFAHNLSTRQ…DWADSTGWKP (212 aa)).

This sequence in the N-terminal section; belongs to the CoaE family. The protein in the C-terminal section; belongs to the UPF0157 (GrpB) family.

The protein localises to the cytoplasm. The catalysed reaction is 3'-dephospho-CoA + ATP = ADP + CoA + H(+). The protein operates within cofactor biosynthesis; coenzyme A biosynthesis; CoA from (R)-pantothenate: step 5/5. Catalyzes the phosphorylation of the 3'-hydroxyl group of dephosphocoenzyme A to form coenzyme A. The sequence is that of Dephospho-CoA kinase from Mycolicibacterium paratuberculosis (strain ATCC BAA-968 / K-10) (Mycobacterium paratuberculosis).